Here is a 1707-residue protein sequence, read N- to C-terminus: Latrophilin Cirl (1707 aa).

Residues 1 to 767 are Extracellular-facing; that stretch reads MLPTILSISY…LFTMFDGNMR (767 aa). One can recognise an SUEL-type lectin domain in the interval 25-114; that stretch reads ACEGKKLTIE…KYLEAHYQCI (90 aa). The N-linked (GlcNAc...) asparagine glycan is linked to asparagine 142. Residues 176–301 are disordered; it reads GLFNVPPQHT…TAASGAVVPG (126 aa). 2 stretches are compositionally biased toward polar residues: residues 185 to 198 and 256 to 265; these read TAVT…STTA and NATSPSNTRI. N-linked (GlcNAc...) asparagine glycosylation is present at asparagine 256. The segment covering 275-285 has biased composition (low complexity); sequence DDGTLLTTKSS. N-linked (GlcNAc...) asparagine glycosylation is found at asparagine 302, asparagine 341, asparagine 398, asparagine 655, asparagine 703, and asparagine 730. The disordered stretch occupies residues 376–400; sequence YDEYDDDPSSTTPAPNGGDCLHNSS. The GAIN-B domain maps to 561–754; the sequence is RSVVQKVKNI…AILMDVVDEH (194 aa). 2 cysteine pairs are disulfide-bonded: cysteine 709–cysteine 736 and cysteine 724–cysteine 738. The segment at 709–754 is GPS; the sequence is CVFWNYIDHAWSANGCSLESTNRTHSVCSCNHLTNFAILMDVVDEH. Residues 768–788 traverse the membrane as a helical segment; that stretch reads IFIYISIGICVVFIVIALLTL. Residues 789–801 lie on the Cytoplasmic side of the membrane; sequence KLFNGVFVKSART. Residues 802 to 822 form a helical membrane-spanning segment; that stretch reads SIYTSIYLCLLAIELLFLLGI. Over 823–828 the chain is Extracellular; sequence EQTETS. The chain crosses the membrane as a helical span at residues 829–849; it reads IFCGFITIFLHCAILSGTAWF. The Cytoplasmic portion of the chain corresponds to 850-875; the sequence is CYEAFHSYSTLTSDELLLEVDQTPKV. Residues 876 to 896 form a helical membrane-spanning segment; it reads NCYYLLSYGLSLSVVAISLVI. Topologically, residues 897–920 are extracellular; sequence DPSTYTQNDYCVLMEANALFYATF. Residues 921–941 form a helical membrane-spanning segment; the sequence is VIPVLVFFVAAIGYTFLSWII. Residues 942–968 lie on the Cytoplasmic side of the membrane; it reads LCRKSRTGLKTKEHTRLASVRFDIRCS. A helical membrane pass occupies residues 969–989; the sequence is FVFLLLLSAVWCSSYFYLRGA. The Extracellular segment spans residues 990 to 999; that stretch reads KMDDDTADVY. The helical transmembrane segment at 1000–1020 threads the bilayer; that stretch reads GYCFICFNTLLGLYIFVFHCI. At 1021-1707 the chain is on the cytoplasmic side; that stretch reads QNEKIRREYR…VRCYLEPLAK (687 aa). At serine 1156 the chain carries Phosphoserine. Disordered regions lie at residues 1169-1188 and 1236-1260; these read AHKQ…GEGY and KPNS…SGSL. Residues 1172 to 1181 are compositionally biased toward low complexity; the sequence is QQQQQQQQQQ. A phosphoserine mark is found at serine 1255 and serine 1262. Over residues 1316-1326 the composition is skewed to low complexity; the sequence is QQLHQQQQQQL. Disordered stretches follow at residues 1316–1335, 1450–1538, 1563–1582, and 1612–1687; these read QQLH…QVEQ, GGGS…SDER, APLD…EHNG, and GGRL…QQRH. 2 positions are modified to phosphoserine: serine 1327 and serine 1328. The span at 1456–1481 shows a compositional bias: low complexity; it reads GGSVSSRSQQQQLKKQQQQQSLAQQR. 2 stretches are compositionally biased toward acidic residues: residues 1489–1503 and 1513–1526; these read DDDD…EEAT and CDED…DLED. Residues 1635–1650 show a composition bias toward polar residues; that stretch reads QTPAQKRQQLQKLSPQ. Residues 1651–1673 are compositionally biased toward low complexity; sequence STTSSSSHTSHSNPNPHPLQLTH. A compositionally biased stretch (basic residues) spans 1674–1686; that stretch reads PHPHQHPPHHQQR.

The protein belongs to the G-protein coupled receptor 2 family. LN-TM7 subfamily. Forms a heterodimer, consisting of a large extracellular region non-covalently linked to a seven-transmembrane moiety. Post-translationally, proteolytically cleaved into 2 subunits, an extracellular subunit and a seven-transmembrane subunit.

The protein localises to the cell membrane. The chain is Latrophilin Cirl from Drosophila yakuba (Fruit fly).